The chain runs to 226 residues: Translation initiation factor 6 (226 aa).

Belongs to the eIF-6 family.

Functionally, binds to the 50S ribosomal subunit and prevents its association with the 30S ribosomal subunit to form the 70S initiation complex. This Haloquadratum walsbyi (strain DSM 16790 / HBSQ001) protein is Translation initiation factor 6.